We begin with the raw amino-acid sequence, 258 residues long: Serine/arginine-rich splicing factor x16 (258 aa).

An RRM domain is found at 8-81 (RKVYVGDLGN…RRARVELSTG (74 aa)). Disordered regions lie at residues 81–113 (GKYA…GGRG) and 130–258 (CRER…VSRD). A compositionally biased stretch (gly residues) spans 86-103 (SGGGGGGGGGGGGGGGLG). Residues 104 to 113 (GRDRGGGGRG) are compositionally biased toward basic and acidic residues. A CCHC-type zinc finger spans residues 116-132 (KCYECGGRGHFARHCRE). 2 stretches are compositionally biased toward basic residues: residues 130–141 (CRERKARQRRRS) and 149–166 (STSR…RSRS). Basic and acidic residues-rich tracts occupy residues 180-197 (NGRD…HERN) and 210-221 (RRYEDEDDDRVR). 2 stretches are compositionally biased toward low complexity: residues 231–240 (RSASPAVRRG) and 249–258 (SSASRSVSRD).

In terms of assembly, interacts (via Arg/Ser-rich region) with Alsin2/CG7564, Rbp1 and Doa (via N-terminus). Post-translationally, highly phosphorylated. May be phosphorylated by the serine/threonine-protein kinase Doa.

Its subcellular location is the nucleus. Serine/arginine-rich splicing factor (SR protein) involved in differential exon usage during RNA transcript processing, probably by binding exonic splicing enhancer elements and recruiting components of the splicing machinery. Binds RNA stem-loop structures with consensus sequence 5'-CCGUNUNKNW-3'. Regulator of genes involved in lipid and carbohydrate metabolism, the immune response and the response to xenobiotics. The sequence is that of Serine/arginine-rich splicing factor x16 from Drosophila melanogaster (Fruit fly).